A 560-amino-acid chain; its full sequence is Phenol regulator MopR (560 aa).

The phenol site is built by H106 and W134. Zn(2+) contacts are provided by C155, E178, C181, and C189. The region spanning A245–L474 is the Sigma-54 factor interaction domain. ATP is bound by residues G273–E280 and A336–E345.

Homodimer.

Its activity is regulated as follows. Activity is triggered by phenol binding. In terms of biological role, involved in the regulation of the phenol degradation pathway. Activates phenol hydroxylase expression in the presence of phenol. This chain is Phenol regulator MopR, found in Acinetobacter guillouiae (Acinetobacter genomosp. 11).